An 85-amino-acid chain; its full sequence is Acylphosphatase (85 aa).

Positions 3 to 85 constitute an Acylphosphatase-like domain; sequence AARFVVSGVV…PARFRRLKTL (83 aa). Active-site residues include Arg-18 and Asn-36. The tract at residues 66-85 is disordered; it reads PPRSRRSRARPARFRRLKTL.

Belongs to the acylphosphatase family.

It carries out the reaction an acyl phosphate + H2O = a carboxylate + phosphate + H(+). The polypeptide is Acylphosphatase (acyP) (Xanthomonas axonopodis pv. citri (strain 306)).